The sequence spans 556 residues: Formate--tetrahydrofolate ligase (556 aa).

65 to 72 lines the ATP pocket; sequence TPAGEGKT.

The protein belongs to the formate--tetrahydrofolate ligase family.

The enzyme catalyses (6S)-5,6,7,8-tetrahydrofolate + formate + ATP = (6R)-10-formyltetrahydrofolate + ADP + phosphate. Its pathway is one-carbon metabolism; tetrahydrofolate interconversion. The chain is Formate--tetrahydrofolate ligase from Lachnoclostridium phytofermentans (strain ATCC 700394 / DSM 18823 / ISDg) (Clostridium phytofermentans).